A 529-amino-acid chain; its full sequence is Peptide chain release factor 3 (529 aa).

Positions 11 to 280 (AKRRTFAIIS…GLVEWAPAPM (270 aa)) constitute a tr-type G domain. GTP contacts are provided by residues 20–27 (SHPDAGKT), 88–92 (DTPGH), and 142–145 (NKLD).

This sequence belongs to the TRAFAC class translation factor GTPase superfamily. Classic translation factor GTPase family. PrfC subfamily.

The protein resides in the cytoplasm. Its function is as follows. Increases the formation of ribosomal termination complexes and stimulates activities of RF-1 and RF-2. It binds guanine nucleotides and has strong preference for UGA stop codons. It may interact directly with the ribosome. The stimulation of RF-1 and RF-2 is significantly reduced by GTP and GDP, but not by GMP. In Shigella sonnei (strain Ss046), this protein is Peptide chain release factor 3.